Consider the following 421-residue polypeptide: DUF724 domain-containing protein 8 (421 aa).

Polar residues-rich tracts occupy residues 149–165 (TQGSGDKTGDSVRNANE) and 199–213 (PRNQNGSGNDSTLEN). The disordered stretch occupies residues 149–229 (TQGSGDKTGD…NRKRKREENL (81 aa)). One can recognise a DUF724 domain in the interval 246-420 (VLPFEKKLRI…LEFLATASAP (175 aa)). A coiled-coil region spans residues 361–397 (EKVTAEKESVKAENKRKILELQRLNEEMDKEIAQSKS).

As to expression, expressed in leaves and flowers, and at lower levels in roots, stems and siliques.

It is found in the nucleus. May be involved in the polar growth of plant cells via transportation of RNAs. In Arabidopsis thaliana (Mouse-ear cress), this protein is DUF724 domain-containing protein 8.